The primary structure comprises 449 residues: Phosphoglucosamine mutase (449 aa).

S101 acts as the Phosphoserine intermediate in catalysis. Mg(2+) is bound by residues S101, D243, D245, and D247. S101 carries the post-translational modification Phosphoserine.

The protein belongs to the phosphohexose mutase family. Requires Mg(2+) as cofactor. Activated by phosphorylation.

The enzyme catalyses alpha-D-glucosamine 1-phosphate = D-glucosamine 6-phosphate. Catalyzes the conversion of glucosamine-6-phosphate to glucosamine-1-phosphate. This Syntrophobacter fumaroxidans (strain DSM 10017 / MPOB) protein is Phosphoglucosamine mutase.